Here is a 37-residue protein sequence, read N- to C-terminus: Cytochrome b6-f complex subunit 5 (37 aa).

A helical transmembrane segment spans residues 5–25; that stretch reads LLSGIILGLIPVTLSGLLVAA.

It belongs to the PetG family. In terms of assembly, the 4 large subunits of the cytochrome b6-f complex are cytochrome b6, subunit IV (17 kDa polypeptide, PetD), cytochrome f and the Rieske protein, while the 4 small subunits are PetG, PetL, PetM and PetN. The complex functions as a dimer.

The protein resides in the plastid. The protein localises to the chloroplast thylakoid membrane. In terms of biological role, component of the cytochrome b6-f complex, which mediates electron transfer between photosystem II (PSII) and photosystem I (PSI), cyclic electron flow around PSI, and state transitions. PetG is required for either the stability or assembly of the cytochrome b6-f complex. In Porphyra purpurea (Red seaweed), this protein is Cytochrome b6-f complex subunit 5.